Here is a 387-residue protein sequence, read N- to C-terminus: Arrestin-C (387 aa).

The protein belongs to the arrestin family. In terms of tissue distribution, retina and pineal gland.

In terms of biological role, may play a role in an as yet undefined retina-specific signal transduction. Could bind to photoactivated-phosphorylated red/green opsins. The chain is Arrestin-C (arr3) from Xenopus laevis (African clawed frog).